The chain runs to 132 residues: Photosystem II extrinsic protein U (132 aa).

Residues 1-29 (MKRLLSWLTGALVMAGLLSSLVLPSAVYA) form the signal peptide.

It belongs to the PsbU family. PSII is composed of 1 copy each of membrane proteins PsbA, PsbB, PsbC, PsbD, PsbE, PsbF, PsbH, PsbI, PsbJ, PsbK, PsbL, PsbM, PsbT, PsbX, PsbY, PsbZ, Psb30/Ycf12, peripheral proteins PsbO, CyanoQ (PsbQ), PsbU, PsbV and a large number of cofactors. It forms dimeric complexes.

It localises to the cellular thylakoid membrane. Functionally, one of the extrinsic, lumenal subunits of photosystem II (PSII). PSII is a light-driven water plastoquinone oxidoreductase, using light energy to abstract electrons from H(2)O, generating a proton gradient subsequently used for ATP formation. The extrinsic proteins stabilize the structure of photosystem II oxygen-evolving complex (OEC), the ion environment of oxygen evolution and protect the OEC against heat-induced inactivation. The sequence is that of Photosystem II extrinsic protein U from Synechococcus sp. (strain CC9902).